The sequence spans 523 residues: MQRAAALVRRGCGPRTPSSWGRSQSSAAAEASAVLKVRPERSRRERILTLESMNPQVKAVEYAVRGPIVLKAGEIELELQRGIKKPFTEVIRANIGDAQAMGQQPITFLRQVMALCTYPNLLDSPSFPEDAKKRARRILQACGGNSLGSYSASQGVNCIREDVAAYITRRDGGVPADPDNIYLTTGASDGISTILKILVSGGGKSRTGVMIPIPQYPLYSAVISELDAIQVNYYLDEENCWALNVNELRRAVQEAKDHCDPKVLCIINPGNPTGQVQSRKCIEDVIHFAWEEKLFLLADEVYQDNVYSPDCRFHSFKKVLYEMGPEYSSNVELASFHSTSKGYMGECGYRGGYMEVINLHPEIKGQLVKLLSVRLCPPVSGQAAMDIVVNPPVAGEESFEQFSREKESVLGNLAKKAKLTEDLFNQVPGIHCNPLQGAMYAFPRIFIPAKAVEAAQAHQMAPDMFYCMKLLEETGICVVPGSGFGQREGTYHFRMTILPPVEKLKTVLQKVKDFHINFLEKYA.

A disordered region spans residues 1–25; sequence MQRAAALVRRGCGPRTPSSWGRSQS. Residues alanine 187, serine 188, tyrosine 216, asparagine 271, and serine 338 each coordinate pyridoxal 5'-phosphate. Lysine 341 carries the post-translational modification N6-(pyridoxal phosphate)lysine. Arginine 350 contacts pyridoxal 5'-phosphate. Lysine 415, lysine 505, and lysine 512 each carry N6-acetyllysine.

It belongs to the class-I pyridoxal-phosphate-dependent aminotransferase family. Alanine aminotransferase subfamily. As to quaternary structure, homodimer. The cofactor is pyridoxal 5'-phosphate. Expressed at high levels in muscle, adipose tissue, kidney and brain and at lower levels in the liver and breast.

The enzyme catalyses L-alanine + 2-oxoglutarate = pyruvate + L-glutamate. Its pathway is amino-acid degradation; L-alanine degradation via transaminase pathway; pyruvate from L-alanine: step 1/1. Its function is as follows. Catalyzes the reversible transamination between alanine and 2-oxoglutarate to form pyruvate and glutamate. The chain is Alanine aminotransferase 2 (GPT2) from Homo sapiens (Human).